Consider the following 1610-residue polypeptide: Voltage-dependent L-type calcium channel subunit alpha-1D (1610 aa).

The interval 1–99 (MMMMMMKKMQ…SKKQGNSSNS (99 aa)) is disordered. Topologically, residues 1–125 (MMMMMMKKMQ…RACISIVEWK (125 aa)) are cytoplasmic. Residues 37–51 (GPTSQPNSSKQTVLS) are compositionally biased toward polar residues. Residues 53-66 (QAAIDAARQAKAAQ) show a composition bias toward low complexity. Residues 81–92 (QRKRQQYAKSKK) show a composition bias toward basic residues. One copy of the I repeat lies at 112 to 408 (NPIRRACISI…LVLGVLSGEF (297 aa)). A helical membrane pass occupies residues 126-144 (PFDIFILLAIFANCVALAI). Over 145–162 (YIPFPEDDSNSTNHNLEK) the chain is Extracellular. N-linked (GlcNAc...) asparagine glycosylation is present at asparagine 154. The helical transmembrane segment at 163 to 182 (VEYAFLIIFTVETFLKIIAY) threads the bilayer. Residues 183–194 (GLLLHPNAYVRN) lie on the Cytoplasmic side of the membrane. Residues 195–213 (GWNLLDFVIVIVGLFSVIL) form a helical membrane-spanning segment. The Extracellular segment spans residues 214 to 234 (EQLTKETEGGNHSSGKSGGFD). An N-linked (GlcNAc...) asparagine glycan is attached at asparagine 224. The helical transmembrane segment at 235–253 (VKALRAFRVLRPLRLVSGV) threads the bilayer. Topologically, residues 254–272 (PSLQVVLNSIIKAMVPLLH) are cytoplasmic. Residues 273–292 (IALLVLFVIIIYAIIGLELF) traverse the membrane as a helical segment. The Extracellular portion of the chain corresponds to 293–380 (IGKMHKTCFF…WMNDAMGFEL (88 aa)). Asparagine 328 is a glycosylation site (N-linked (GlcNAc...) asparagine). Glutamate 363 is a Ca(2+) binding site. A helical membrane pass occupies residues 381-405 (PWVYFVSLVIFGSFFVLNLVLGVLS). Topologically, residues 406–522 (GEFSKEREKA…RRCRAAVKSV (117 aa)) are cytoplasmic. A binding to the beta subunit region spans residues 428 to 445 (EQLEEDLKGYLDWITQAE). The disordered stretch occupies residues 448–487 (DPENEEEGGEEGKRNTSMPTSETESVNTENVSGEGETQGS). The span at 462 to 487 (NTSMPTSETESVNTENVSGEGETQGS) shows a compositional bias: polar residues. Residues 508–754 (NRFNRRRCRA…VFLAIAVDNL (247 aa)) form an II repeat. The chain crosses the membrane as a helical span at residues 523–542 (TFYWLVIVLVFLNTLTISSE). Residues 543-557 (HYNQPDWLTQIQDIA) are Extracellular-facing. A helical transmembrane segment spans residues 558–576 (NKVLLALFTCEMLVKMYSL). Topologically, residues 577–584 (GLQAYFVS) are cytoplasmic. A helical transmembrane segment spans residues 585–603 (LFNRFDCFVVCGGITETIL). The Extracellular segment spans residues 604–613 (VELELMSPLG). A helical transmembrane segment spans residues 614–632 (VSVFRCVRLLRIFKVTRHW). Residues 633 to 651 (TSLSNLVASLLNSMKSIAS) lie on the Cytoplasmic side of the membrane. A helical transmembrane segment spans residues 652 to 672 (LLLLLFLFIIIFSLLGMQLFG). At 673–726 (GKFNFDETQTKRSTFDNFPQALLTVFQILTGEDWNAVMYDGIMAYGGPSSSGMI) the chain is on the extracellular side. Glutamate 704 contributes to the Ca(2+) binding site. Residues 727 to 751 (VCIYFIILFICGNYILLNVFLAIAV) form a helical membrane-spanning segment. Topologically, residues 752-884 (DNLADAESLN…VGCHKLINHH (133 aa)) are cytoplasmic. Residues 765-789 (KEEAEEKERKKIARKESLENKKNNK) are compositionally biased toward basic and acidic residues. Residues 765-846 (KEEAEEKERK…VPAGPRPRRI (82 aa)) form a disordered region. Polar residues predominate over residues 790 to 801 (PEVNQIANSDNK). The segment covering 824–836 (VGEEEEEEEEEPE) has biased composition (acidic residues). The III repeat unit spans residues 871-1153 (NPIRVGCHKL…IFVGFVIVTF (283 aa)). Residues 885–903 (IFTNLILVFIMLSSAALAA) form a helical membrane-spanning segment. Over 904 to 919 (EDPIRSHSFRNTILGY) the chain is Extracellular. A helical transmembrane segment spans residues 920 to 939 (FDYAFTAIFTVEILLKMTTF). Residues 940–951 (GAFLHKGAFCRN) lie on the Cytoplasmic side of the membrane. Residues 952 to 970 (YFNLLDMLVVGVSLVSFGI) form a helical membrane-spanning segment. At 971 to 976 (QSSAIS) the chain is on the extracellular side. The helical transmembrane segment at 977 to 996 (VVKILRVLRVLRPLRAINRA) threads the bilayer. Residues 997–1015 (KGLKHVVQCVFVAIRTIGN) are Cytoplasmic-facing. Residues 1016–1035 (IMIVTTLLQFMFACIGVQLF) traverse the membrane as a helical segment. Residues 1036-1125 (KGKFYRCTDE…AGPVYNHRVE (90 aa)) are Extracellular-facing. A dihydropyridine binding region spans residues 1073 to 1163 (RIWQNSDFNF…QEQGEKEYKN (91 aa)). Glutamate 1099 lines the Ca(2+) pocket. The chain crosses the membrane as a helical span at residues 1126-1146 (ISIFFIIYIIIVAFFMMNIFV). Over 1147–1203 (GFVIVTFQEQGEKEYKNCELDKNQRQCVEYALKARPLRRYIPKNPYQYKFWYVVNSS) the chain is Cytoplasmic. One copy of the IV repeat lies at 1190 to 1465 (NPYQYKFWYV…LFVAVIMDNF (276 aa)). The helical transmembrane segment at 1204–1222 (PFEYMMFVLIMLNTLCLAM) threads the bilayer. Residues 1223–1237 (QHYEQSKMFNDAMDI) lie on the Extracellular side of the membrane. The helical transmembrane segment at 1238–1257 (LNMVFTGVFTVEMVLKVIAF) threads the bilayer. The Cytoplasmic segment spans residues 1258–1264 (KPKGYFS). A helical transmembrane segment spans residues 1265-1286 (DAWNTFDSLIVIGSIIDVALSE). Residues 1287–1311 (ADPTESESLPLPTATPGNSEESNRI) are Extracellular-facing. Residues 1312 to 1331 (SITFFRLFRVMRLVKLLSRG) form a helical membrane-spanning segment. Residues 1332–1350 (EGIRTLLWTFIKSFQALPY) are Cytoplasmic-facing. The chain crosses the membrane as a helical span at residues 1351-1370 (VALLIAMLFFIYAVIGMQMF). Over 1371–1437 (GKVAMRDNNQ…GEEYTCGSNF (67 aa)) the chain is Extracellular. Residues 1418–1484 (LCDPDSDYNP…LGPHHLDEFK (67 aa)) are dihydropyridine binding. Residues 1430-1473 (EYTCGSNFAIVYFISFYMLCAFLIINLFVAVIMDNFDYLTRDWS) form a phenylalkylamine binding region. Residues 1438 to 1462 (AIVYFISFYMLCAFLIINLFVAVIM) form a helical membrane-spanning segment. The Cytoplasmic portion of the chain corresponds to 1463–1610 (DNFDYLTRDW…CFLSPSRSRS (148 aa)).

The protein belongs to the calcium channel alpha-1 subunit (TC 1.A.1.11) family. CACNA1D subfamily. In terms of assembly, voltage-dependent calcium channels are multisubunit complexes, consisting of alpha-1, alpha-2, beta and delta subunits in a 1:1:1:1 ratio. The channel activity is directed by the pore-forming and voltage-sensitive alpha-1 subunit. In many cases, this subunit is sufficient to generate voltage-sensitive calcium channel activity. The auxiliary subunits beta and alpha-2/delta linked by a disulfide bridge regulate the channel activity. Interacts with RIMBP2. Interacts with CABP1 and CABP4, resulting in a near elimination of calcium-dependent inactivation of the channel. As to expression, expressed in brain, heart and skeletal muscle.

Its subcellular location is the membrane. The enzyme catalyses Ca(2+)(in) = Ca(2+)(out). Functionally, voltage-sensitive calcium channels (VSCC) mediate the entry of calcium ions into excitable cells and are also involved in a variety of calcium-dependent processes, including muscle contraction, hormone or neurotransmitter release, gene expression, cell motility, cell division and cell death. The isoform alpha-1D gives rise to L-type calcium currents. Long-lasting (L-type) calcium channels belong to the 'high-voltage activated' (HVA) group. They are blocked by dihydropyridines (DHP), phenylalkylamines, and by benzothiazepines. This is Voltage-dependent L-type calcium channel subunit alpha-1D (CACNA1D) from Mesocricetus auratus (Golden hamster).